The primary structure comprises 25 residues: Antimicrobial peptide 3 (25 aa).

As to expression, skin.

It localises to the secreted. Its function is as follows. Has antibacterial activity against Gram-positive bacterium S.aureus and Gram-negative bacterium E.coli, when in combination with XT1 and XT6. This is Antimicrobial peptide 3 from Xenopus tropicalis (Western clawed frog).